We begin with the raw amino-acid sequence, 291 residues long: 4-diphosphocytidyl-2-C-methyl-D-erythritol kinase (291 aa).

Lysine 14 is a catalytic residue. ATP is bound at residue 96–106 (PFGAGLGGGSS). Aspartate 138 is an active-site residue.

This sequence belongs to the GHMP kinase family. IspE subfamily.

It catalyses the reaction 4-CDP-2-C-methyl-D-erythritol + ATP = 4-CDP-2-C-methyl-D-erythritol 2-phosphate + ADP + H(+). It functions in the pathway isoprenoid biosynthesis; isopentenyl diphosphate biosynthesis via DXP pathway; isopentenyl diphosphate from 1-deoxy-D-xylulose 5-phosphate: step 3/6. Functionally, catalyzes the phosphorylation of the position 2 hydroxy group of 4-diphosphocytidyl-2C-methyl-D-erythritol. This Chlorobium phaeovibrioides (strain DSM 265 / 1930) (Prosthecochloris vibrioformis (strain DSM 265)) protein is 4-diphosphocytidyl-2-C-methyl-D-erythritol kinase.